The sequence spans 570 residues: Proline--tRNA ligase (570 aa).

This sequence belongs to the class-II aminoacyl-tRNA synthetase family. ProS type 1 subfamily. Homodimer.

It is found in the cytoplasm. It catalyses the reaction tRNA(Pro) + L-proline + ATP = L-prolyl-tRNA(Pro) + AMP + diphosphate. Its function is as follows. Catalyzes the attachment of proline to tRNA(Pro) in a two-step reaction: proline is first activated by ATP to form Pro-AMP and then transferred to the acceptor end of tRNA(Pro). As ProRS can inadvertently accommodate and process non-cognate amino acids such as alanine and cysteine, to avoid such errors it has two additional distinct editing activities against alanine. One activity is designated as 'pretransfer' editing and involves the tRNA(Pro)-independent hydrolysis of activated Ala-AMP. The other activity is designated 'posttransfer' editing and involves deacylation of mischarged Ala-tRNA(Pro). The misacylated Cys-tRNA(Pro) is not edited by ProRS. The sequence is that of Proline--tRNA ligase from Neisseria gonorrhoeae (strain ATCC 700825 / FA 1090).